Consider the following 89-residue polypeptide: Transcription elongation factor 1 homolog (89 aa).

Cys25, Cys28, Cys49, and Cys52 together coordinate Zn(2+).

Belongs to the ELOF1 family.

It is found in the nucleus. Its function is as follows. Transcription elongation factor implicated in the maintenance of proper chromatin structure in actively transcribed regions. In Oryza sativa subsp. japonica (Rice), this protein is Transcription elongation factor 1 homolog.